Here is a 197-residue protein sequence, read N- to C-terminus: Molybdenum cofactor guanylyltransferase (197 aa).

Residues 10-12 (LAG), lysine 23, asparagine 51, aspartate 69, and aspartate 99 each bind GTP. Aspartate 99 is a binding site for Mg(2+).

The protein belongs to the MobA family. In terms of assembly, monomer. Requires Mg(2+) as cofactor.

It localises to the cytoplasm. It carries out the reaction Mo-molybdopterin + GTP + H(+) = Mo-molybdopterin guanine dinucleotide + diphosphate. Transfers a GMP moiety from GTP to Mo-molybdopterin (Mo-MPT) cofactor (Moco or molybdenum cofactor) to form Mo-molybdopterin guanine dinucleotide (Mo-MGD) cofactor. This is Molybdenum cofactor guanylyltransferase from Shewanella sp. (strain MR-4).